A 488-amino-acid chain; its full sequence is UDP-N-acetylmuramate--L-alanine ligase (488 aa).

129-135 (GSHGKTT) is a binding site for ATP.

This sequence belongs to the MurCDEF family.

Its subcellular location is the cytoplasm. The catalysed reaction is UDP-N-acetyl-alpha-D-muramate + L-alanine + ATP = UDP-N-acetyl-alpha-D-muramoyl-L-alanine + ADP + phosphate + H(+). The protein operates within cell wall biogenesis; peptidoglycan biosynthesis. Cell wall formation. This Prochlorococcus marinus (strain MIT 9303) protein is UDP-N-acetylmuramate--L-alanine ligase.